Consider the following 1024-residue polypeptide: Translation initiation factor IF-2 (1024 aa).

Residues 33-425 (SHMSSLEDDT…GRVKKTKTMK (393 aa)) are disordered. Basic and acidic residues-rich tracts occupy residues 43–62 (EARV…DTRV), 135–148 (TPED…ELKP), 167–198 (TPAK…KETS), and 223–263 (SKPD…KEVR). The segment covering 316–325 (EATQAPTSPQ) has biased composition (polar residues). The span at 332 to 350 (KPADKGPARAQAHRPDTGR) shows a compositional bias: basic and acidic residues. The segment covering 365–375 (RSKKKEWKKKG) has biased composition (basic residues). Residues 394-406 (SVVEGKDLYEKGR) are compositionally biased toward basic and acidic residues. Over residues 407-423 (SGKKGRRKDGRVKKTKT) the composition is skewed to basic residues. Residues 518–687 (SRPPVVTIMG…LLQSEVLELK (170 aa)) form the tr-type G domain. The segment at 527–534 (GHVDHGKT) is G1. Residue 527–534 (GHVDHGKT) coordinates GTP. A G2 region spans residues 552 to 556 (GITQH). Residues 573–576 (DTPG) are G3. GTP is bound by residues 573-577 (DTPGH) and 627-630 (NKMD). The segment at 627–630 (NKMD) is G4. Residues 663–665 (SAK) are G5.

This sequence belongs to the TRAFAC class translation factor GTPase superfamily. Classic translation factor GTPase family. IF-2 subfamily.

The protein resides in the cytoplasm. Its function is as follows. One of the essential components for the initiation of protein synthesis. Protects formylmethionyl-tRNA from spontaneous hydrolysis and promotes its binding to the 30S ribosomal subunits. Also involved in the hydrolysis of GTP during the formation of the 70S ribosomal complex. The polypeptide is Translation initiation factor IF-2 (Desulforapulum autotrophicum (strain ATCC 43914 / DSM 3382 / VKM B-1955 / HRM2) (Desulfobacterium autotrophicum)).